The primary structure comprises 150 residues: uncharacterized protein (150 aa).

Residues 5–66 (LDKVDRRLLE…KPNYKKLNLG (62 aa)) form the HTH asnC-type domain. The segment at residues 24 to 43 (IATLSKKLGIPRTTVHYRIK) is a DNA-binding region (H-T-H motif).

This is an uncharacterized protein from Pyrococcus horikoshii (strain ATCC 700860 / DSM 12428 / JCM 9974 / NBRC 100139 / OT-3).